Reading from the N-terminus, the 577-residue chain is uncharacterized protein (577 aa).

Polar residues-rich tracts occupy residues 1 to 21 (MSST…QSAS) and 68 to 87 (SFQN…SKTE). Disordered stretches follow at residues 1 to 24 (MSST…SAHP) and 68 to 93 (SFQN…PDDV). Helical transmembrane passes span 139–159 (CILA…AVPA), 174–194 (LLTM…WAPL), 204–224 (ILIG…GKDI), 232–252 (FFAG…LADM), 262–282 (ITLF…VGGF), 292–312 (WTEY…YLFC), 367–387 (PICF…YLLL), 402–422 (MGVA…GSGI), 447–467 (LPPM…LSWS), 473–493 (VNWV…LLIF), 504–526 (YLFR…AAGF), and 543–563 (GSLL…FFFF).

Belongs to the major facilitator superfamily. CAR1 family.

The protein localises to the endoplasmic reticulum. Its subcellular location is the membrane. This is an uncharacterized protein from Schizosaccharomyces pombe (strain 972 / ATCC 24843) (Fission yeast).